We begin with the raw amino-acid sequence, 334 residues long: 4-hydroxy-3-methylbut-2-enyl diphosphate reductase (334 aa).

C19 is a binding site for [4Fe-4S] cluster. H48 and H84 together coordinate (2E)-4-hydroxy-3-methylbut-2-enyl diphosphate. Residues H48 and H84 each contribute to the dimethylallyl diphosphate site. Positions 48 and 84 each coordinate isopentenyl diphosphate. C106 is a [4Fe-4S] cluster binding site. Residue H134 participates in (2E)-4-hydroxy-3-methylbut-2-enyl diphosphate binding. H134 contacts dimethylallyl diphosphate. H134 serves as a coordination point for isopentenyl diphosphate. E136 acts as the Proton donor in catalysis. T175 serves as a coordination point for (2E)-4-hydroxy-3-methylbut-2-enyl diphosphate. C205 contacts [4Fe-4S] cluster. (2E)-4-hydroxy-3-methylbut-2-enyl diphosphate contacts are provided by S233, S234, N235, and S278. Dimethylallyl diphosphate is bound by residues S233, S234, N235, and S278. 4 residues coordinate isopentenyl diphosphate: S233, S234, N235, and S278.

This sequence belongs to the IspH family. [4Fe-4S] cluster is required as a cofactor.

It carries out the reaction isopentenyl diphosphate + 2 oxidized [2Fe-2S]-[ferredoxin] + H2O = (2E)-4-hydroxy-3-methylbut-2-enyl diphosphate + 2 reduced [2Fe-2S]-[ferredoxin] + 2 H(+). The catalysed reaction is dimethylallyl diphosphate + 2 oxidized [2Fe-2S]-[ferredoxin] + H2O = (2E)-4-hydroxy-3-methylbut-2-enyl diphosphate + 2 reduced [2Fe-2S]-[ferredoxin] + 2 H(+). The protein operates within isoprenoid biosynthesis; dimethylallyl diphosphate biosynthesis; dimethylallyl diphosphate from (2E)-4-hydroxy-3-methylbutenyl diphosphate: step 1/1. It functions in the pathway isoprenoid biosynthesis; isopentenyl diphosphate biosynthesis via DXP pathway; isopentenyl diphosphate from 1-deoxy-D-xylulose 5-phosphate: step 6/6. Functionally, catalyzes the conversion of 1-hydroxy-2-methyl-2-(E)-butenyl 4-diphosphate (HMBPP) into a mixture of isopentenyl diphosphate (IPP) and dimethylallyl diphosphate (DMAPP). Acts in the terminal step of the DOXP/MEP pathway for isoprenoid precursor biosynthesis. This Chelativorans sp. (strain BNC1) protein is 4-hydroxy-3-methylbut-2-enyl diphosphate reductase.